Consider the following 139-residue polypeptide: Heat shock protein homolog C338.06c (139 aa).

The sHSP domain maps to Ala-27–Gln-139.

This sequence belongs to the small heat shock protein (HSP20) family.

It localises to the mitochondrion. The protein is Heat shock protein homolog C338.06c of Schizosaccharomyces pombe (strain 972 / ATCC 24843) (Fission yeast).